The chain runs to 912 residues: Transcription factor bHLH140 (912 aa).

Residues 1-57 (MDDFNLRSENPNSSSTTSSSSSSFHRHKSETGNTKRSRSTSTLSTDPQSVAARDRRH) are disordered. The span at 13–23 (SSSTTSSSSSS) shows a compositional bias: low complexity. Residues 43 to 92 (LSTDPQSVAARDRRHRISDRFKILQSMVPGGAKMDTVSMLDEAISYVKFL) enclose the bHLH domain. 234–241 (GPPGSGKS) serves as a coordination point for ATP. One can recognise a Macro domain in the interval 511–690 (KAKASQKNID…KYKGSQDKAV (180 aa)). Residues 657–666 (PKRSSQTAVS) show a composition bias toward polar residues. Positions 657–706 (PKRSSQTAVSDSGEDIKEDSERNKKYKGSQDKAVTNNLESESLEDTRGSG) are disordered. One can recognise an HIT domain in the interval 720 to 829 (LHSIAMHPER…SQDFNSDSLK (110 aa)). A C2H2-type zinc finger spans residues 870 to 893 (LRCNRCRSAHPNIPKLKSHVRSCH).

As to quaternary structure, homodimer.

It localises to the nucleus. The chain is Transcription factor bHLH140 (BHLH140) from Arabidopsis thaliana (Mouse-ear cress).